A 31-amino-acid polypeptide reads, in one-letter code: Cyclotide vpub-B (31 aa).

The cyclopeptide (Gly-Asn) cross-link spans 1-31; it reads GIIPCGESCVFIPCITSVVGCSCKSKVCYKN. Intrachain disulfides connect Cys-5–Cys-21, Cys-9–Cys-23, and Cys-14–Cys-28.

The protein belongs to the cyclotide family. Bracelet subfamily. This is a cyclic peptide.

Functionally, probably participates in a plant defense mechanism. In Viola pubescens (Downy yellow violet), this protein is Cyclotide vpub-B.